A 134-amino-acid chain; its full sequence is Large ribosomal subunit protein uL14 (134 aa).

It belongs to the universal ribosomal protein uL14 family. As to quaternary structure, in the 70S ribosome, L14 and L19 interact and together make contacts with the 16S rRNA in bridges B5 and B8. Part of the 50S ribosomal subunit. Forms a cluster with proteins L3 and L19.

Functionally, forms part of two intersubunit bridges in the 70S ribosome. Binds to 23S rRNA. This Deinococcus radiodurans (strain ATCC 13939 / DSM 20539 / JCM 16871 / CCUG 27074 / LMG 4051 / NBRC 15346 / NCIMB 9279 / VKM B-1422 / R1) protein is Large ribosomal subunit protein uL14.